Here is a 132-residue protein sequence, read N- to C-terminus: Venom CUB domain-containing protein 2 (132 aa).

A signal peptide spans 1 to 17 (MKTLFLAIALFSAVALA). Positions 22–129 (ESAELVPGGE…RGFVACKATA (108 aa)) constitute a CUB domain. Cystine bridges form between cysteine 66/cysteine 125 and cysteine 77/cysteine 94.

Belongs to the venom CUB family. In terms of tissue distribution, expressed by the venom gland (posterior main gland) (at protein level).

The protein localises to the secreted. This Platymeris rhadamanthus (Red spot assassin bug) protein is Venom CUB domain-containing protein 2.